The chain runs to 155 residues: SsrA-binding protein (155 aa).

The protein belongs to the SmpB family.

It localises to the cytoplasm. Required for rescue of stalled ribosomes mediated by trans-translation. Binds to transfer-messenger RNA (tmRNA), required for stable association of tmRNA with ribosomes. tmRNA and SmpB together mimic tRNA shape, replacing the anticodon stem-loop with SmpB. tmRNA is encoded by the ssrA gene; the 2 termini fold to resemble tRNA(Ala) and it encodes a 'tag peptide', a short internal open reading frame. During trans-translation Ala-aminoacylated tmRNA acts like a tRNA, entering the A-site of stalled ribosomes, displacing the stalled mRNA. The ribosome then switches to translate the ORF on the tmRNA; the nascent peptide is terminated with the 'tag peptide' encoded by the tmRNA and targeted for degradation. The ribosome is freed to recommence translation, which seems to be the essential function of trans-translation. This chain is SsrA-binding protein, found in Lawsonia intracellularis (strain PHE/MN1-00).